A 285-amino-acid chain; its full sequence is GPN-loop GTPase 3 (285 aa).

13 to 18 (GSGKST) lines the GTP pocket. Positions 72–74 (GPN) match the Gly-Pro-Asn (GPN)-loop; involved in dimer interface motif. 174–177 (TKMD) serves as a coordination point for GTP. Positions 261 to 285 (KEPKENEEDKSENFDEFFQDRADEP) are disordered. A compositionally biased stretch (acidic residues) spans 265 to 277 (ENEEDKSENFDEF).

The protein belongs to the GPN-loop GTPase family. Heterodimer with gpn1. Binds to RNA polymerase II (RNAPII).

Its function is as follows. Small GTPase required for proper localization of RNA polymerase II (RNAPII). May act at an RNAP assembly step prior to nuclear import. The protein is GPN-loop GTPase 3 of Xenopus tropicalis (Western clawed frog).